The chain runs to 365 residues: UDP-N-acetylglucosamine--N-acetylmuramyl-(pentapeptide) pyrophosphoryl-undecaprenol N-acetylglucosamine transferase (365 aa).

UDP-N-acetyl-alpha-D-glucosamine-binding positions include 17–19, Asn-129, Arg-167, Ser-194, Ile-250, 269–274, and Gln-295; these read TGG and ALTVSE.

This sequence belongs to the glycosyltransferase 28 family. MurG subfamily.

The protein localises to the cell inner membrane. The catalysed reaction is di-trans,octa-cis-undecaprenyl diphospho-N-acetyl-alpha-D-muramoyl-L-alanyl-D-glutamyl-meso-2,6-diaminopimeloyl-D-alanyl-D-alanine + UDP-N-acetyl-alpha-D-glucosamine = di-trans,octa-cis-undecaprenyl diphospho-[N-acetyl-alpha-D-glucosaminyl-(1-&gt;4)]-N-acetyl-alpha-D-muramoyl-L-alanyl-D-glutamyl-meso-2,6-diaminopimeloyl-D-alanyl-D-alanine + UDP + H(+). It functions in the pathway cell wall biogenesis; peptidoglycan biosynthesis. Its function is as follows. Cell wall formation. Catalyzes the transfer of a GlcNAc subunit on undecaprenyl-pyrophosphoryl-MurNAc-pentapeptide (lipid intermediate I) to form undecaprenyl-pyrophosphoryl-MurNAc-(pentapeptide)GlcNAc (lipid intermediate II). This chain is UDP-N-acetylglucosamine--N-acetylmuramyl-(pentapeptide) pyrophosphoryl-undecaprenol N-acetylglucosamine transferase, found in Shewanella woodyi (strain ATCC 51908 / MS32).